The sequence spans 498 residues: PHD finger protein 10 (498 aa).

The segment covering 1–10 (MAAAAGPGAA) has biased composition (low complexity). Residues 1 to 62 (MAAAAGPGAA…SSRSCETSSQ (62 aa)) are disordered. The residue at position 2 (alanine 2) is an N-acetylalanine. Phosphoserine occurs at positions 12, 36, and 50. The segment at 89 to 185 (MLQEQVSEYL…HYKEYSQMQQ (97 aa)) is essential to induce neural progenitor proliferation. Residues 89-295 (MLQEQVSEYL…PPLDPELPAL (207 aa)) are SAY. Lysine 241 participates in a covalent cross-link: Glycyl lysine isopeptide (Lys-Gly) (interchain with G-Cter in SUMO2). At serine 270 the chain carries Phosphoserine. Residues 285–296 (EPPLDPELPALD) show a composition bias toward low complexity. Residues 285 to 368 (EPPLDPELPA…KRSVLSKSVP (84 aa)) are disordered. The interval 292–334 (LPALDSDGDSDDGEDGRGDEKRKNKGTSDSSSGNVSEGESPPD) is essential to induce neural progenitor proliferation. Phosphoserine is present on residues serine 297, serine 301, serine 327, and serine 331. Residues 318–328 (TSDSSSGNVSE) are compositionally biased toward polar residues. The segment covering 345–359 (KSKDKAATPRKDGPK) has biased composition (basic and acidic residues). A PHD-type 1; degenerate zinc finger spans residues 379–436 (ICGICLKGKESNKKGKAESLIHCSQCENSGHPSCLDMTMELVSMIKTYPWQCMECKTC). A Glycyl lysine isopeptide (Lys-Gly) (interchain with G-Cter in SUMO2) cross-link involves residue lysine 385. A PHD-type 2; degenerate zinc finger spans residues 438 to 481 (ICGQPHHEEEMMFCDMCDRGYHTFCVGLGAIPSGRWICDCCQRA).

It belongs to the SAYP family. As to quaternary structure, component of neural progenitors-specific chromatin remodeling complex (npBAF complex) composed of at least, ARID1A/BAF250A or ARID1B/BAF250B, SMARCD1/BAF60A, SMARCD3/BAF60C, SMARCA2/BRM/BAF190B, SMARCA4/BRG1/BAF190A, SMARCB1/BAF47, SMARCC1/BAF155, SMARCE1/BAF57, SMARCC2/BAF170, PHF10/BAF45A, ACTL6A/BAF53A and actin. Interacts with ACTL6A/BAF53A, SMARCA2/BRM/BAF190B, SMARCA4/BRG1/BAF190A and PBRM1/BAF180.

Its subcellular location is the nucleus. In terms of biological role, involved in transcription activity regulation by chromatin remodeling. Belongs to the neural progenitors-specific chromatin remodeling complex (npBAF complex) and is required for the proliferation of neural progenitors. During neural development a switch from a stem/progenitor to a post-mitotic chromatin remodeling mechanism occurs as neurons exit the cell cycle and become committed to their adult state. The transition from proliferating neural stem/progenitor cells to post-mitotic neurons requires a switch in subunit composition of the npBAF and nBAF complexes. As neural progenitors exit mitosis and differentiate into neurons, npBAF complexes which contain ACTL6A/BAF53A and PHF10/BAF45A, are exchanged for homologous alternative ACTL6B/BAF53B and DPF1/BAF45B or DPF3/BAF45C subunits in neuron-specific complexes (nBAF). The npBAF complex is essential for the self-renewal/proliferative capacity of the multipotent neural stem cells. The nBAF complex along with CREST plays a role regulating the activity of genes essential for dendrite growth. The protein is PHD finger protein 10 (PHF10) of Homo sapiens (Human).